The primary structure comprises 623 residues: MAPKITSELLRQLRQAMRNLEYVTEPIQAYIIPSGDAHQSEYIAPCDCRRAFVSGFDGSAGTAIVTEEHAAMWTDGRYFLQAAKQMDSNWTLMKMGLKDTPTQEDWLVSVLPEGSRVGVDPLIIPTDYWKKMAKVLRSAGHHLIPVKDNLVDKIWTDRPERPCKPLITLGLDYTGISWKDKVADLRLKMAERNVVWFVVTALDEIAWLFNLRGSDVEHNPVFFSYAILGLETIMLFIDGDRIDAPIVKEHLLLDLGLEAEYRIQVLPYKSILSELKILCASLSPREKVWVSDKASYAVSEAIPKDHRCCMPYTPICIAKAVKNSAESEGMRRAHIKDAVALCELFNWLEKEVPKGGVTEISAANKAEEFRRQQADFVDLSFPTISSTGPNGAIIHYAPVPETNRTLSLDEVYLIDSGAQYKDGTTDVTRTMHFGTPTAYEKECFTYVLKGHIAVSAAVFPTGTKGHLLDSFARSALWDSGLDYLHGTGHGVGSFLNVHEGPCGISYKTFSDEPLEAGMIVTDEPGYYEDGAFGIRIENVVLVVPVKTKYNFNNRGSLTFEPLTLVPIQTKMIDVDSLTDKECDWLNSYHLTCRDVIGKELQKQGRQEALEWLIRETQPISKQP.

Arginine 77 provides a ligand contact to a peptide. Position 304 is an N6-acetyllysine (lysine 304). Histidine 395 contacts a peptide. The Mn(2+) site is built by aspartate 415, aspartate 426, and histidine 489. Histidine 489, histidine 498, and glutamate 523 together coordinate a peptide. 2 residues coordinate Mn(2+): glutamate 523 and glutamate 537.

It belongs to the peptidase M24B family. Homodimer. The cofactor is Mn(2+).

It localises to the cytoplasm. The protein localises to the cytosol. The catalysed reaction is Release of any N-terminal amino acid, including proline, that is linked to proline, even from a dipeptide or tripeptide.. Its function is as follows. Metalloaminopeptidase that catalyzes the removal of a penultimate prolyl residue from the N-termini of peptides, such as Arg-Pro-Pro. Contributes to the degradation of bradykinin. This chain is Xaa-Pro aminopeptidase 1 (XPNPEP1), found in Bos taurus (Bovine).